A 154-amino-acid polypeptide reads, in one-letter code: CASP-like protein ARALYDRAFT_485429 (154 aa).

Topologically, residues 1-12 (MENVPGSFGTSA) are cytoplasmic. The helical transmembrane segment at 13–33 (SFALRFGQTIFSAASLIFMCF) threads the bilayer. The Extracellular segment spans residues 34-41 (DYDFYDFT). A helical transmembrane segment spans residues 42–62 (TFCYLATVMAIVTPWSILLAL). Residues 63 to 81 (TDTYSVLVKLLPQELRVLS) are Cytoplasmic-facing. The helical transmembrane segment at 82–102 (IVFAGDFVLSFLSLGGACAVA) threads the bilayer. Over 103-128 (SATELLASADGKICDGNLCIQYQVSA) the chain is Extracellular. Residues 129-149 (ALAFLCWFLLLASALFNFWSL) form a helical membrane-spanning segment. The Cytoplasmic portion of the chain corresponds to 150–154 (PSLYY).

Belongs to the Casparian strip membrane proteins (CASP) family. As to quaternary structure, homodimer and heterodimers.

Its subcellular location is the cell membrane. This chain is CASP-like protein ARALYDRAFT_485429, found in Arabidopsis lyrata subsp. lyrata (Lyre-leaved rock-cress).